The chain runs to 409 residues: Argininosuccinate synthase (409 aa).

Residues 8–16 and Ala-34 each bind ATP; that span reads AYSGGLDTS. Tyr-85 is an L-citrulline binding site. ATP is bound at residue Gly-115. L-aspartate is bound by residues Thr-117, Asn-121, and Asp-122. Asn-121 contributes to the L-citrulline binding site. The L-citrulline site is built by Arg-125, Ser-178, Ser-187, Glu-268, and Tyr-280.

It belongs to the argininosuccinate synthase family. Type 1 subfamily. In terms of assembly, homotetramer.

It localises to the cytoplasm. The catalysed reaction is L-citrulline + L-aspartate + ATP = 2-(N(omega)-L-arginino)succinate + AMP + diphosphate + H(+). The protein operates within amino-acid biosynthesis; L-arginine biosynthesis; L-arginine from L-ornithine and carbamoyl phosphate: step 2/3. This chain is Argininosuccinate synthase, found in Thermotoga petrophila (strain ATCC BAA-488 / DSM 13995 / JCM 10881 / RKU-1).